The primary structure comprises 399 residues: Probable tRNA sulfurtransferase (399 aa).

One can recognise a THUMP domain in the interval 60 to 165 (YAVMERLKRV…TEGTYISCET (106 aa)). ATP-binding positions include 183 to 184 (LL), 208 to 209 (HF), arginine 265, glycine 287, and glutamine 296.

Belongs to the ThiI family.

The protein resides in the cytoplasm. The enzyme catalyses [ThiI sulfur-carrier protein]-S-sulfanyl-L-cysteine + a uridine in tRNA + 2 reduced [2Fe-2S]-[ferredoxin] + ATP + H(+) = [ThiI sulfur-carrier protein]-L-cysteine + a 4-thiouridine in tRNA + 2 oxidized [2Fe-2S]-[ferredoxin] + AMP + diphosphate. It catalyses the reaction [ThiS sulfur-carrier protein]-C-terminal Gly-Gly-AMP + S-sulfanyl-L-cysteinyl-[cysteine desulfurase] + AH2 = [ThiS sulfur-carrier protein]-C-terminal-Gly-aminoethanethioate + L-cysteinyl-[cysteine desulfurase] + A + AMP + 2 H(+). It participates in cofactor biosynthesis; thiamine diphosphate biosynthesis. Functionally, catalyzes the ATP-dependent transfer of a sulfur to tRNA to produce 4-thiouridine in position 8 of tRNAs, which functions as a near-UV photosensor. Also catalyzes the transfer of sulfur to the sulfur carrier protein ThiS, forming ThiS-thiocarboxylate. This is a step in the synthesis of thiazole, in the thiamine biosynthesis pathway. The sulfur is donated as persulfide by IscS. This is Probable tRNA sulfurtransferase from Brevibacillus brevis (strain 47 / JCM 6285 / NBRC 100599).